We begin with the raw amino-acid sequence, 135 residues long: Small ribosomal subunit protein bS16m (135 aa).

A mitochondrion-targeting transit peptide spans 1–34 (MVQLTTIFCKAYHGGHLTIRLALGGCTNRPFYRI).

The protein belongs to the bacterial ribosomal protein bS16 family. In terms of assembly, component of the mitochondrial ribosome small subunit (28S) which comprises a 12S rRNA and about 30 distinct proteins.

The protein resides in the mitochondrion. In Mus musculus (Mouse), this protein is Small ribosomal subunit protein bS16m (Mrps16).